The chain runs to 241 residues: DNA repair protein RecO (241 aa).

Belongs to the RecO family.

Functionally, involved in DNA repair and RecF pathway recombination. The polypeptide is DNA repair protein RecO (Rickettsia bellii (strain OSU 85-389)).